The chain runs to 332 residues: Putative pumilio homolog 17 (332 aa).

A PUM-HD domain is found at 1-302 (MTNINRLSMS…ILTADLFYSL (302 aa)). The Pumilio 1 repeat unit spans residues 82–117 (SDSDYFMVITRNKNGSKSLQKLMRMSDDMDVFFFVA). Residues 118 to 152 (IMRLFIHVMIDKYASYVAIQGMRIFKQDKRELMYD) form a Pumilio 2; degenerate repeat. Pumilio repeat units lie at residues 153–188 (HILRYALFLARDQYGCIALNEIIKELDDPYYRDELM), 189–225 (DIVSNNALLLSNDAYGNFVVQHVLKLHDSRCTGNIAD), 226–264 (KLCGYCVELSFKKYGSYIVERLLEVRDIPMATIVLDLLA), and 265–300 (CKTEMLIRLARSENGNFVVCKLLELTNDILTADLFY).

It localises to the cytoplasm. Functionally, sequence-specific RNA-binding protein that regulates translation and mRNA stability by binding the 3'-UTR of target mRNAs. The protein is Putative pumilio homolog 17 (APUM17) of Arabidopsis thaliana (Mouse-ear cress).